The following is a 206-amino-acid chain: Guanylate kinase (206 aa).

One can recognise a Guanylate kinase-like domain in the interval 5–184; it reads GMLIVLSGPS…AAERIKAIIR (180 aa). 12-19 is a binding site for ATP; sequence GPSGVGKG.

It belongs to the guanylate kinase family.

The protein resides in the cytoplasm. The enzyme catalyses GMP + ATP = GDP + ADP. Its function is as follows. Essential for recycling GMP and indirectly, cGMP. This chain is Guanylate kinase, found in Lactiplantibacillus plantarum (strain ATCC BAA-793 / NCIMB 8826 / WCFS1) (Lactobacillus plantarum).